The primary structure comprises 3080 residues: Adhesion G-protein coupled receptor G4 (3080 aa).

The signal sequence occupies residues 1-27 (MKEHIIYQKLYGLILMSSFIFLSDTLS). Residues 28–2740 (LKGKKLDFFG…SRSTVDSVNE (2713 aa)) lie on the Extracellular side of the membrane. Positions 29–228 (KGKKLDFFGR…IPTVDRTLRC (200 aa)) constitute a Pentraxin (PTX) domain. 2 cysteine pairs are disulfide-bonded: C58-C123 and C200-C228. Mg(2+) is bound at residue D202. N233, N487, N836, and N899 each carry an N-linked (GlcNAc...) asparagine glycan. The span at 946–959 (SEGISAGSPTSGST) shows a compositional bias: polar residues. The tract at residues 946-965 (SEGISAGSPTSGSTHIFGEP) is disordered. An N-linked (GlcNAc...) asparagine glycan is attached at N1020. The disordered stretch occupies residues 1274 to 1348 (VTEMSPSKNS…ITPTLTSSNT (75 aa)). 3 stretches are compositionally biased toward polar residues: residues 1277–1296 (MSPS…SLEM), 1305–1315 (TKISSHQTHSP), and 1324–1348 (SDGN…SSNT). N1519 is a glycosylation site (N-linked (GlcNAc...) asparagine). The segment covering 2109–2139 (SRTTITANPRTVSHPSSFSRKTMSPSTTDHT) has biased composition (polar residues). Residues 2109-2141 (SRTTITANPRTVSHPSSFSRKTMSPSTTDHTLS) are disordered. Residues N2361 and N2640 are each glycosylated (N-linked (GlcNAc...) asparagine). Residues 2578-2734 (MAFSIHSYEE…GVLMDLSRST (157 aa)) enclose the GAIN-B domain. 2 disulfide bridges follow: C2685–C2716 and C2704–C2718. Residues 2685 to 2734 (CAFWDFENNNGLGGWNSSGCKVKETNVNYTICQCDHLTHFGVLMDLSRST) form a GPS region. A stachel region spans residues 2723 to 2734 (HFGVLMDLSRST). The chain crosses the membrane as a helical span at residues 2741–2766 (QILALITYTGCGISSIFLGVAVVTYI). The Cytoplasmic segment spans residues 2767–2777 (AFHKLRKDYPA). The helical transmembrane segment at 2778–2800 (KILINLCTALLMLNLVFLINSWL) threads the bilayer. At 2801–2806 (SSFQKV) the chain is on the extracellular side. A helical transmembrane segment spans residues 2807–2835 (GVCITAAVALHYFLLVSFTWMGLEAVHMY). The cysteines at positions 2809 and 2886 are disulfide-linked. The Cytoplasmic portion of the chain corresponds to 2836–2849 (LALVKVFNIYIPNY). Residues 2850 to 2870 (ILKFCLVGWGIPAIMVAITVS) traverse the membrane as a helical segment. At 2871 to 2892 (VKKDLYGTLSPTTPFCWIKDDS) the chain is on the extracellular side. Residues 2893–2918 (IFYISVVAYFCLIFLMNLSMFCTVLV) traverse the membrane as a helical segment. Topologically, residues 2919–2937 (QLNSVKSQIQKTRRKMILH) are cytoplasmic. The chain crosses the membrane as a helical span at residues 2938 to 2961 (DLKGTMSLTFLLGLTWGFAFFAWG). At 2962 to 2965 (PMRN) the chain is on the extracellular side. A helical transmembrane segment spans residues 2966–2989 (FFLYLFAIFNTLQGFFIFVFHCVM). The Cytoplasmic segment spans residues 2990–3080 (KESVREQWQI…FDKDPYCSSP (91 aa)). The span at 3051-3065 (FKSLGSAQGTPSEIS) shows a compositional bias: polar residues. Residues 3051 to 3080 (FKSLGSAQGTPSEISFPNDDFDKDPYCSSP) form a disordered region.

Belongs to the G-protein coupled receptor 2 family. Adhesion G-protein coupled receptor (ADGR) subfamily. Homodimer; homodimerizes via its Pentraxin domain in a calcium-independent manner. Heterodimer of 2 chains generated by proteolytic processing; the large extracellular N-terminal fragment and the membrane-bound C-terminal fragment predominantly remain associated and non-covalently linked. Post-translationally, autoproteolytically processed at the GPS region of the GAIN-B domain; this cleavage modulates receptor activity. N-glycosylated. As to expression, detected in fetal retina. Highly expressed in normal enterochromaffin cells and in neuroendocrine carcinoma. Detected in normal liver; highly expressed in primary liver carcinoma.

It is found in the membrane. Forms a heterodimer of 2 chains generated by proteolytic processing that remain associated through non-covalent interactions mediated by the GAIN-B domain. In the inactivated receptor, the Stachel sequence (also named stalk) is embedded in the GAIN-B domain, where it adopts a beta-strand conformation. On activation, the Stachel moves into the 7 transmembrane region and adopts a twisted hook-shaped configuration that forms contacts within the receptor, leading to coupling of a G-alpha protein, which activates signaling. The cleaved GAIN-B and N-terminal domains can then dissociate from the rest of the receptor. Orphan adhesion G-protein coupled receptor (aGPCR). Ligand binding causes a conformation change that triggers signaling via guanine nucleotide-binding proteins (G proteins) and modulates the activity of downstream effectors, such as adenylate cyclase. ADGRG4 is coupled to G(s) G proteins and mediates activation of adenylate cyclase activity. May be act as sensor of mechanical forces. The protein is Adhesion G-protein coupled receptor G4 of Homo sapiens (Human).